Here is a 172-residue protein sequence, read N- to C-terminus: 3-phenylpropionate/cinnamic acid dioxygenase subunit beta (172 aa).

This sequence belongs to the bacterial ring-hydroxylating dioxygenase beta subunit family. This dioxygenase system consists of four proteins: the two subunits of the hydroxylase component (HcaE and HcaF), a ferredoxin (HcaC) and a ferredoxin reductase (HcaD).

The enzyme catalyses 3-phenylpropanoate + NADH + O2 + H(+) = 3-(cis-5,6-dihydroxycyclohexa-1,3-dien-1-yl)propanoate + NAD(+). It carries out the reaction (E)-cinnamate + NADH + O2 + H(+) = (2E)-3-(cis-5,6-dihydroxycyclohexa-1,3-dien-1-yl)prop-2-enoate + NAD(+). The protein operates within aromatic compound metabolism; 3-phenylpropanoate degradation. Functionally, part of the multicomponent 3-phenylpropionate dioxygenase. Converts 3-phenylpropionic acid (PP) and cinnamic acid (CI) into 3-phenylpropionate-dihydrodiol (PP-dihydrodiol) and cinnamic acid-dihydrodiol (CI-dihydrodiol), respectively. The protein is 3-phenylpropionate/cinnamic acid dioxygenase subunit beta of Escherichia coli O139:H28 (strain E24377A / ETEC).